The sequence spans 456 residues: Exodeoxyribonuclease 7 large subunit (456 aa).

Belongs to the XseA family. As to quaternary structure, heterooligomer composed of large and small subunits.

Its subcellular location is the cytoplasm. It carries out the reaction Exonucleolytic cleavage in either 5'- to 3'- or 3'- to 5'-direction to yield nucleoside 5'-phosphates.. Its function is as follows. Bidirectionally degrades single-stranded DNA into large acid-insoluble oligonucleotides, which are then degraded further into small acid-soluble oligonucleotides. The chain is Exodeoxyribonuclease 7 large subunit from Lactobacillus gasseri (strain ATCC 33323 / DSM 20243 / BCRC 14619 / CIP 102991 / JCM 1131 / KCTC 3163 / NCIMB 11718 / NCTC 13722 / AM63).